The chain runs to 537 residues: Probable alpha-galactosidase A (537 aa).

Positions 1-23 (MNQGTKSILLAATLAAIPWQVYG) are cleaved as a signal peptide. Cys46 and Cys78 are disulfide-bonded. Asn49, Asn87, Asn93, and Asn123 each carry an N-linked (GlcNAc...) asparagine glycan. Residues Cys126 and Cys156 are joined by a disulfide bond. The active-site Nucleophile is the Asp154. N-linked (GlcNAc...) asparagine glycosylation is present at Asn203. Catalysis depends on Asp212, which acts as the Proton donor. 2 N-linked (GlcNAc...) asparagine glycosylation sites follow: Asn355 and Asn436. The Ricin B-type lectin domain maps to 413 to 537 (CSSVVPTGLV…FGLPSGVQLS (125 aa)). Cystine bridges form between Cys430-Cys444 and Cys469-Cys482. Asn491 is a glycosylation site (N-linked (GlcNAc...) asparagine).

It belongs to the glycosyl hydrolase 27 family.

It localises to the secreted. The catalysed reaction is Hydrolysis of terminal, non-reducing alpha-D-galactose residues in alpha-D-galactosides, including galactose oligosaccharides, galactomannans and galactolipids.. Functionally, hydrolyzes a variety of simple alpha-D-galactoside as well as more complex molecules such as oligosaccharides and polysaccharides. The sequence is that of Probable alpha-galactosidase A (aglA) from Aspergillus niger (strain ATCC MYA-4892 / CBS 513.88 / FGSC A1513).